Consider the following 359-residue polypeptide: Ribosomal RNA large subunit methyltransferase M (359 aa).

S-adenosyl-L-methionine contacts are provided by residues Ser186, 219-222 (CPGG), Asp238, Asp258, and Asp275. Lys304 functions as the Proton acceptor in the catalytic mechanism.

This sequence belongs to the class I-like SAM-binding methyltransferase superfamily. RNA methyltransferase RlmE family. RlmM subfamily. As to quaternary structure, monomer.

The protein resides in the cytoplasm. It carries out the reaction cytidine(2498) in 23S rRNA + S-adenosyl-L-methionine = 2'-O-methylcytidine(2498) in 23S rRNA + S-adenosyl-L-homocysteine + H(+). Catalyzes the 2'-O-methylation at nucleotide C2498 in 23S rRNA. This Vibrio parahaemolyticus serotype O3:K6 (strain RIMD 2210633) protein is Ribosomal RNA large subunit methyltransferase M.